We begin with the raw amino-acid sequence, 188 residues long: SRP-independent targeting protein 3 (188 aa).

The helical transmembrane segment at 27–47 (TIIMYIRILYCSSIGISWIIY) threads the bilayer. Ser-157 is modified (phosphoserine). The disordered stretch occupies residues 157 to 188 (SLFGGMGQTGPKTDKKSIEEAERAGNAGVKAE). Over residues 168–179 (KTDKKSIEEAER) the composition is skewed to basic and acidic residues.

It belongs to the PHO88 family. As to quaternary structure, interacts with ENV10/SND2. ENV10/SND2 and PHO88/SND3 form a complex with the translocon in the endoplasmic reticulum membrane.

The protein localises to the endoplasmic reticulum membrane. It localises to the mitochondrion. Its function is as follows. Functions in the SND pathway, a SRP (signal recognition particle) and GET (guided entry of tail-anchored proteins) independent pathway for targeting a broad range of substrate proteins to the endoplasmic reticulum. SND functions in parallel to GET in targeting proteins with downstream hydrophobic motifs. Involved in inorganic phosphate uptake. Also involved in telomere length regulation and maintenance. This chain is SRP-independent targeting protein 3, found in Saccharomyces cerevisiae (strain ATCC 204508 / S288c) (Baker's yeast).